Consider the following 123-residue polypeptide: SGSCEVKTCWWAQPDFRAIGDYLKDKYDSASEMVVEKHRESRGWVETLRAKYALFKPPTERDLVYYENSPNFCEPNPETGLFGTRDRTCNVTSHGIDGCDLLCCGRGHNTRTEKRKEKCHCIF.

A lipid anchor (O-palmitoleoyl serine; by PORCN) is attached at serine 1. Cysteines 89 and 104 form a disulfide. N-linked (GlcNAc...) asparagine glycosylation is present at asparagine 90.

It belongs to the Wnt family. Post-translationally, palmitoleoylation is required for efficient binding to frizzled receptors. Depalmitoleoylation leads to Wnt signaling pathway inhibition.

It is found in the secreted. It localises to the extracellular space. Its subcellular location is the extracellular matrix. Its function is as follows. Ligand for members of the frizzled family of seven transmembrane receptors. Probable developmental protein. May be a signaling molecule which affects the development of discrete regions of tissues. Is likely to signal over only few cell diameters. This chain is Protein Wnt-3b (WNT3B), found in Meleagris gallopavo (Wild turkey).